Consider the following 355-residue polypeptide: Chemerin-like receptor 2 (355 aa).

The Extracellular portion of the chain corresponds to 1-41 (MEDLEETLFEEFENYSYALDYYSLESDLEEKVQLGVVHWVS). N-linked (GlcNAc...) asparagine glycosylation occurs at Asn14. A helical membrane pass occupies residues 42–62 (LVLYCLSFVLGIPGNAIVIWF). The Cytoplasmic portion of the chain corresponds to 63-73 (TGFKWKRTVST). The chain crosses the membrane as a helical span at residues 74-94 (LWFLNLAIADFIFLLFLPLYI). Residues 95 to 112 (SYVVMNFHWPFGIWLCKA) lie on the Extracellular side of the membrane. A disulfide bridge connects residues Cys110 and Cys187. A helical transmembrane segment spans residues 113 to 133 (NSFTAQLNMFASVFFLTVISL). At 134–154 (DHYIHLIHPVLSHRHRTLKNS) the chain is on the cytoplasmic side. The helical transmembrane segment at 155 to 175 (LIVIIFIWLLASLIGGPALYF) threads the bilayer. At 176–210 (RDTVEFNNHTLCYNNFQKHDPDLTVIRHHVLTWVK) the chain is on the extracellular side. A helical transmembrane segment spans residues 211 to 231 (YIVGYLFPLLTMSICYLCLIL). The Cytoplasmic segment spans residues 232-247 (KVKKRSILISSRHFWT). The chain crosses the membrane as a helical span at residues 248-268 (ILAVVVAFVVCWTPYHLFSIW). The Extracellular portion of the chain corresponds to 269 to 286 (ELTIHHNSYSHHVMQAGI). Residues 287–307 (PLSTGLAFLNSCLNPILYVLI) form a helical membrane-spanning segment. Over 308 to 355 (SKKFQARFRSSVAEILKYTLWEVSCSGTVSEQLRNSETKNLCLLETAQ) the chain is Cytoplasmic.

Belongs to the chemokine-like receptor (CMKLR) family.

The protein resides in the cell membrane. Its function is as follows. Receptor for chemoattractant adipokine chemerin/RARRES2 suggesting a role for this receptor in the regulation of inflammation and energy homesotasis. Signals mainly via beta-arrestin pathway. Binding of RARRES2 activates weakly G proteins, calcium mobilization and MAPK1/MAPK3 (ERK1/2) phosphorylation too. Acts also as a receptor for TAFA1, mediates its effects on neuronal stem-cell proliferation and differentiation via the activation of ROCK/ERK and ROCK/STAT3 signaling pathway. This chain is Chemerin-like receptor 2 (CMKLR2), found in Macaca fascicularis (Crab-eating macaque).